The following is a 79-amino-acid chain: D-alanyl carrier protein (79 aa).

In terms of domain architecture, Carrier spans 1–77 (MDIKSEVIEI…KIIAGIVELQ (77 aa)). O-(pantetheine 4'-phosphoryl)serine is present on Ser35.

It belongs to the DltC family. 4'-phosphopantetheine is transferred from CoA to a specific serine of apo-DCP.

The protein resides in the cytoplasm. It participates in cell wall biogenesis; lipoteichoic acid biosynthesis. Its function is as follows. Carrier protein involved in the D-alanylation of lipoteichoic acid (LTA). The loading of thioester-linked D-alanine onto DltC is catalyzed by D-alanine--D-alanyl carrier protein ligase DltA. The DltC-carried D-alanyl group is further transferred to cell membrane phosphatidylglycerol (PG) by forming an ester bond, probably catalyzed by DltD. D-alanylation of LTA plays an important role in modulating the properties of the cell wall in Gram-positive bacteria, influencing the net charge of the cell wall. The protein is D-alanyl carrier protein of Streptococcus pneumoniae serotype 2 (strain D39 / NCTC 7466).